We begin with the raw amino-acid sequence, 484 residues long: UDP-N-acetylmuramoyl-L-alanyl-D-glutamate--L-lysine ligase (484 aa).

Ser-43 provides a ligand contact to UDP-N-acetyl-alpha-D-muramoyl-L-alanyl-D-glutamate. 119–125 contacts ATP; sequence GTKGKTT. UDP-N-acetyl-alpha-D-muramoyl-L-alanyl-D-glutamate contacts are provided by residues 161 to 162, Ser-188, and Arg-196; that span reads TT. Residue Lys-230 is modified to N6-carboxylysine. The L-lysine recognition motif motif lies at 405–408; the sequence is DDPN.

Belongs to the MurCDEF family. MurE subfamily. Post-translationally, carboxylation is probably crucial for Mg(2+) binding and, consequently, for the gamma-phosphate positioning of ATP.

It localises to the cytoplasm. The catalysed reaction is UDP-N-acetyl-alpha-D-muramoyl-L-alanyl-D-glutamate + L-lysine + ATP = UDP-N-acetyl-alpha-D-muramoyl-L-alanyl-gamma-D-glutamyl-L-lysine + ADP + phosphate + H(+). The protein operates within cell wall biogenesis; peptidoglycan biosynthesis. Its function is as follows. Catalyzes the addition of L-lysine to the nucleotide precursor UDP-N-acetylmuramoyl-L-alanyl-D-glutamate (UMAG) in the biosynthesis of bacterial cell-wall peptidoglycan. This chain is UDP-N-acetylmuramoyl-L-alanyl-D-glutamate--L-lysine ligase, found in Streptococcus agalactiae serotype Ia (strain ATCC 27591 / A909 / CDC SS700).